The following is a 1012-amino-acid chain: Structural polyprotein (1012 aa).

An a divalent metal cation-binding site is contributed by aspartate 30. The Peptidase S50 domain maps to 513–755; that stretch reads ADKGYEVVAN…AGRQYHLAMA (243 aa). Serine 652 (nucleophile) is an active-site residue. Lysine 692 is a catalytic residue. The disordered stretch occupies residues 969 to 1012; it reads AMELKHRNPRRAPPKPKPKPNAPTQRPPGRLGRWIRTVSDEDLE. Residues 975–986 are compositionally biased toward basic residues; the sequence is RNPRRAPPKPKP. The tract at residues 1003-1012 is interaction with VP1 protein; that stretch reads IRTVSDEDLE.

In terms of assembly, homotrimer. A central divalent metal stabilizes the VP2 trimer. Interacts with host ITGA4/ITGB1. As to quaternary structure, homodimer. Interacts (via C-terminus) with VP1 in the cytoplasm. Interacts with VP2. Specific enzymatic cleavages yield mature proteins. The capsid assembly seems to be regulated by polyprotein processing. The protease VP4 cleaves itself off the polyprotein, thus releasing pre-VP2 and VP3 within the infected cell. During capsid assembly, the C-terminus of pre-VP2 is further processed by VP4, giving rise to VP2, the external capsid protein and three small peptides that all stay closely associated with the capsid.

It localises to the virion. It is found in the host cytoplasm. Capsid protein VP2 self assembles to form an icosahedral capsid with a T=13 symmetry, about 70 nm in diameter, and consisting of 260 VP2 trimers. The capsid encapsulates the genomic dsRNA. VP2 is also involved in attachment and entry into the host cell by interacting with host ITGA4/ITGB1. Its function is as follows. The precursor of VP2 plays an important role in capsid assembly. First, pre-VP2 and VP2 oligomers assemble to form a procapsid. Then, the pre-VP2 intermediates may be processed into VP2 proteins by proteolytic cleavage mediated by VP4 to obtain the mature virion. The final capsid is composed of pentamers and hexamers but VP2 has a natural tendency to assemble into all-pentameric structures. Therefore pre-VP2 may be required to allow formation of the hexameric structures. In terms of biological role, protease VP4 is a serine protease that cleaves the polyprotein into its final products. Pre-VP2 is first partially cleaved, and may be completely processed by VP4 upon capsid maturation. Functionally, capsid protein VP3 plays a key role in virion assembly by providing a scaffold for the capsid made of VP2. May self-assemble to form a T=4-like icosahedral inner-capsid composed of at least 180 trimers. Plays a role in genomic RNA packaging by recruiting VP1 into the capsid and interacting with the dsRNA genome segments to form a ribonucleoprotein complex. Additionally, the interaction of the VP3 C-terminal tail with VP1 removes the inherent structural blockade of the polymerase active site. Thus, VP3 can also function as a transcriptional activator. Structural peptide 1 is a small peptide derived from pre-VP2 C-terminus. It destabilizes and perforates cell membranes, suggesting a role during entry. Its function is as follows. Structural peptide 2 is a small peptide derived from pVP2 C-terminus. It is not essential for the virus viability, but viral growth is affected when missing. In terms of biological role, structural peptide 3 is a small peptide derived from pVP2 C-terminus. It is not essential for the virus viability, but viral growth is affected when missing. Functionally, structural peptide 4 is a small peptide derived from pVP2 C-terminus. It is essential for the virus viability. The sequence is that of Structural polyprotein from Avian infectious bursal disease virus (strain STC) (IBDV).